The sequence spans 79 residues: Sec-independent protein translocase protein TatA (79 aa).

A helical membrane pass occupies residues 1–21; sequence MGSLSIWHWIVVIAVILLLFG. Basic and acidic residues predominate over residues 43–60; it reads MQDDEKTAEKPEPVKTID. The disordered stretch occupies residues 43-79; that stretch reads MQDDEKTAEKPEPVKTIDHNAPAPGASRSDVGSKTTV.

Belongs to the TatA/E family. As to quaternary structure, the Tat system comprises two distinct complexes: a TatABC complex, containing multiple copies of TatA, TatB and TatC subunits, and a separate TatA complex, containing only TatA subunits. Substrates initially bind to the TatABC complex, which probably triggers association of the separate TatA complex to form the active translocon.

The protein resides in the cell inner membrane. Functionally, part of the twin-arginine translocation (Tat) system that transports large folded proteins containing a characteristic twin-arginine motif in their signal peptide across membranes. TatA could form the protein-conducting channel of the Tat system. The polypeptide is Sec-independent protein translocase protein TatA (Nitrobacter hamburgensis (strain DSM 10229 / NCIMB 13809 / X14)).